A 341-amino-acid chain; its full sequence is Ribosomal RNA small subunit methyltransferase H (341 aa).

S-adenosyl-L-methionine-binding positions include Gly47–Tyr49, Asp64, Phe91, Asp109, and Gln116.

This sequence belongs to the methyltransferase superfamily. RsmH family.

The protein localises to the cytoplasm. The enzyme catalyses cytidine(1402) in 16S rRNA + S-adenosyl-L-methionine = N(4)-methylcytidine(1402) in 16S rRNA + S-adenosyl-L-homocysteine + H(+). Specifically methylates the N4 position of cytidine in position 1402 (C1402) of 16S rRNA. The sequence is that of Ribosomal RNA small subunit methyltransferase H from Rhizobium leguminosarum bv. trifolii (strain WSM2304).